The sequence spans 259 residues: Large ribosomal subunit protein uL3c (259 aa).

Residues Leu-1–Ser-37 constitute a chloroplast transit peptide. Residues Met-176–Thr-211 are disordered. The span at Tyr-199–Thr-211 shows a compositional bias: basic residues.

This sequence belongs to the universal ribosomal protein uL3 family. Part of the 50S ribosomal subunit.

It localises to the plastid. Its subcellular location is the chloroplast. One of the primary rRNA binding proteins, it binds directly near the 3'-end of the 23S rRNA, where it nucleates assembly of the 50S subunit. The polypeptide is Large ribosomal subunit protein uL3c (RPL3) (Nicotiana tabacum (Common tobacco)).